The chain runs to 1059 residues: Translation initiation factor IF-2 (1059 aa).

2 stretches are compositionally biased toward polar residues: residues 55-75 (LPHSPSLSAAPEKSNSQNQDS) and 107-126 (KINNNLVTTPPNTSVLNNQV). 3 disordered regions span residues 55–81 (LPHSPSLSAAPEKSNSQNQDSGIGYNE), 93–394 (PKPL…RLRL), and 418–468 (SLSL…QSAE). Positions 178-187 (DSNEKSKVEV) are enriched in basic and acidic residues. A compositionally biased stretch (polar residues) spans 202-211 (LNRNLRNTGV). Residues 216-229 (QKNKKPKQEGKKRK) show a composition bias toward basic residues. Composition is skewed to basic and acidic residues over residues 230–252 (DKEEKPFEKPAIVSKKENKDTSI) and 259–273 (SKKENKDTFQNRESV). The span at 274-284 (KTSASDTSSQL) shows a compositional bias: polar residues. Basic and acidic residues-rich tracts occupy residues 291–300 (KPTVKLKQEQ) and 359–368 (LTKDKKVSKW). The span at 452–463 (SHESVQSESNEQ) shows a compositional bias: low complexity. Residues 556-733 (RRPPVVTIMG…EVEDLQANPE (178 aa)) enclose the tr-type G domain. The G1 stretch occupies residues 565–572 (GHVDHGKT). 565-572 (GHVDHGKT) contributes to the GTP binding site. Residues 590 to 594 (GITQH) are G2. The interval 615-618 (DTPG) is G3. GTP contacts are provided by residues 615-619 (DTPGH) and 669-672 (NKID). The segment at 669 to 672 (NKID) is G4. The G5 stretch occupies residues 705-707 (SAI).

The protein belongs to the TRAFAC class translation factor GTPase superfamily. Classic translation factor GTPase family. IF-2 subfamily.

The protein resides in the cytoplasm. Functionally, one of the essential components for the initiation of protein synthesis. Protects formylmethionyl-tRNA from spontaneous hydrolysis and promotes its binding to the 30S ribosomal subunits. Also involved in the hydrolysis of GTP during the formation of the 70S ribosomal complex. In Trichodesmium erythraeum (strain IMS101), this protein is Translation initiation factor IF-2.